Consider the following 399-residue polypeptide: Acetate kinase (399 aa).

Residue Asn-10 participates in Mg(2+) binding. Lys-17 is an ATP binding site. Arg-91 provides a ligand contact to substrate. Residue Asp-148 is the Proton donor/acceptor of the active site. ATP is bound by residues 208–212 (HLGNG), 283–285 (DCR), and 331–335 (GIGEN). Residue Glu-385 coordinates Mg(2+).

This sequence belongs to the acetokinase family. As to quaternary structure, homodimer. Requires Mg(2+) as cofactor. It depends on Mn(2+) as a cofactor.

It is found in the cytoplasm. The enzyme catalyses acetate + ATP = acetyl phosphate + ADP. It functions in the pathway metabolic intermediate biosynthesis; acetyl-CoA biosynthesis; acetyl-CoA from acetate: step 1/2. In terms of biological role, catalyzes the formation of acetyl phosphate from acetate and ATP. Can also catalyze the reverse reaction. The polypeptide is Acetate kinase (Shewanella baltica (strain OS223)).